The primary structure comprises 168 residues: Phosphopantetheine adenylyltransferase (168 aa).

Thr-10 is a binding site for substrate. ATP contacts are provided by residues 10-11 (TF) and His-18. The substrate site is built by Lys-42, Leu-74, and Arg-88. Residues 89–91 (GLR), Glu-99, and 124–130 (NSFISST) contribute to the ATP site.

It belongs to the bacterial CoaD family. As to quaternary structure, homohexamer. Mg(2+) is required as a cofactor.

It is found in the cytoplasm. The catalysed reaction is (R)-4'-phosphopantetheine + ATP + H(+) = 3'-dephospho-CoA + diphosphate. It participates in cofactor biosynthesis; coenzyme A biosynthesis; CoA from (R)-pantothenate: step 4/5. Reversibly transfers an adenylyl group from ATP to 4'-phosphopantetheine, yielding dephospho-CoA (dPCoA) and pyrophosphate. In Shewanella denitrificans (strain OS217 / ATCC BAA-1090 / DSM 15013), this protein is Phosphopantetheine adenylyltransferase.